Reading from the N-terminus, the 111-residue chain is T cell receptor alpha variable 18 (111 aa).

Residues 1–20 (MLSASCSGLVILLIFRRTSG) form the signal peptide. One can recognise an Ig-like domain in the interval 21-111 (DSVTQTEGPV…DSAVYYCALR (91 aa)). Asn-41 carries an N-linked (GlcNAc...) asparagine glycan. The cysteines at positions 42 and 108 are disulfide-linked.

Alpha-beta TR is a heterodimer composed of an alpha and beta chain; disulfide-linked. The alpha-beta TR is associated with the transmembrane signaling CD3 coreceptor proteins to form the TR-CD3 (TcR or TCR). The assembly of alpha-beta TR heterodimers with CD3 occurs in the endoplasmic reticulum where a single alpha-beta TR heterodimer associates with one CD3D-CD3E heterodimer, one CD3G-CD3E heterodimer and one CD247 homodimer forming a stable octameric structure. CD3D-CD3E and CD3G-CD3E heterodimers preferentially associate with TR alpha and TR beta chains, respectively. The association of the CD247 homodimer is the last step of TcR assembly in the endoplasmic reticulum and is required for transport to the cell surface.

The protein resides in the cell membrane. V region of the variable domain of T cell receptor (TR) alpha chain that participates in the antigen recognition. Alpha-beta T cell receptors are antigen specific receptors which are essential to the immune response and are present on the cell surface of T lymphocytes. Recognize peptide-major histocompatibility (MH) (pMH) complexes that are displayed by antigen presenting cells (APC), a prerequisite for efficient T cell adaptive immunity against pathogens. Binding of alpha-beta TR to pMH complex initiates TR-CD3 clustering on the cell surface and intracellular activation of LCK that phosphorylates the ITAM motifs of CD3G, CD3D, CD3E and CD247 enabling the recruitment of ZAP70. In turn ZAP70 phosphorylates LAT, which recruits numerous signaling molecules to form the LAT signalosome. The LAT signalosome propagates signal branching to three major signaling pathways, the calcium, the mitogen-activated protein kinase (MAPK) kinase and the nuclear factor NF-kappa-B (NF-kB) pathways, leading to the mobilization of transcription factors that are critical for gene expression and essential for T cell growth and differentiation. The T cell repertoire is generated in the thymus, by V-(D)-J rearrangement. This repertoire is then shaped by intrathymic selection events to generate a peripheral T cell pool of self-MH restricted, non-autoaggressive T cells. Post-thymic interaction of alpha-beta TR with the pMH complexes shapes TR structural and functional avidity. This Homo sapiens (Human) protein is T cell receptor alpha variable 18.